We begin with the raw amino-acid sequence, 147 residues long: Transthyretin (147 aa).

A signal peptide spans 1–20 (MASFRLFLLCLAGLVFVSEA). Cys-30 carries the sulfocysteine modification. Residue Lys-35 participates in L-thyroxine binding. Glu-62 bears the 4-carboxyglutamate mark. A Phosphoserine modification is found at Ser-72. L-thyroxine is bound at residue Glu-74. The N-linked (GlcNAc...) asparagine glycan is linked to Asn-118. Residue Ser-137 coordinates L-thyroxine.

Belongs to the transthyretin family. Homotetramer. Dimer of dimers. In the homotetramer, subunits assemble around a central channel that can accommodate two ligand molecules. Interacts with RBP4. Sulfonation of the reactive cysteine Cys-30 enhances the stability of the native conformation of TTR, avoiding misassembly of the protein leading to amyloid formation. Detected in serum (at protein level).

The protein resides in the secreted. In terms of biological role, thyroid hormone-binding protein. Probably transports thyroxine from the bloodstream to the brain. This is Transthyretin (TTR) from Bos taurus (Bovine).